A 973-amino-acid chain; its full sequence is Serine/threonine-protein kinase atg1 (973 aa).

One can recognise a Protein kinase domain in the interval Tyr-23–Ile-328. ATP contacts are provided by residues Ile-29–Val-37 and Lys-52. Residue Asp-166 is the Proton acceptor of the active site. Disordered stretches follow at residues Asp-338 to Gln-446, Arg-460 to Arg-482, Gly-523 to Thr-587, and Pro-949 to Lys-973. A compositionally biased stretch (polar residues) spans Gly-387–Pro-407. The segment covering Gly-523–Arg-537 has biased composition (polar residues). The span at Ser-566–Tyr-582 shows a compositional bias: basic and acidic residues. The span at Pro-951–Val-965 shows a compositional bias: polar residues.

Belongs to the protein kinase superfamily. Ser/Thr protein kinase family. APG1/unc-51/ULK1 subfamily. As to quaternary structure, homodimer. Forms a ternary complex with ATG13 and ATG17.

It localises to the cytoplasm. It is found in the preautophagosomal structure membrane. It catalyses the reaction L-seryl-[protein] + ATP = O-phospho-L-seryl-[protein] + ADP + H(+). The enzyme catalyses L-threonyl-[protein] + ATP = O-phospho-L-threonyl-[protein] + ADP + H(+). In terms of biological role, serine/threonine protein kinase involved in the cytoplasm to vacuole transport (Cvt) and found to be essential in autophagy, where it is required for the formation of autophagosomes. Involved in the clearance of protein aggregates which cannot be efficiently cleared by the proteasome. Required for selective autophagic degradation of the nucleus (nucleophagy) as well as for mitophagy which contributes to regulate mitochondrial quantity and quality by eliminating the mitochondria to a basal level to fulfill cellular energy requirements and preventing excess ROS production. Also involved in endoplasmic reticulum-specific autophagic process, in selective removal of ER-associated degradation (ERAD) substrates. Plays a key role in ATG9 and ATG23 cycling through the pre-autophagosomal structure and is necessary to promote ATG18 binding to ATG9 through phosphorylation of ATG9. Catalyzes phosphorylation of ATG4, decreasing the interaction between ATG4 and ATG8 and impairing deconjugation of PE-conjugated forms of ATG8. The polypeptide is Serine/threonine-protein kinase atg1 (Aspergillus fumigatus (strain ATCC MYA-4609 / CBS 101355 / FGSC A1100 / Af293) (Neosartorya fumigata)).